The primary structure comprises 237 residues: Phosphoribosylaminoimidazole-succinocarboxamide synthase (237 aa).

The protein belongs to the SAICAR synthetase family.

It carries out the reaction 5-amino-1-(5-phospho-D-ribosyl)imidazole-4-carboxylate + L-aspartate + ATP = (2S)-2-[5-amino-1-(5-phospho-beta-D-ribosyl)imidazole-4-carboxamido]succinate + ADP + phosphate + 2 H(+). It participates in purine metabolism; IMP biosynthesis via de novo pathway; 5-amino-1-(5-phospho-D-ribosyl)imidazole-4-carboxamide from 5-amino-1-(5-phospho-D-ribosyl)imidazole-4-carboxylate: step 1/2. This chain is Phosphoribosylaminoimidazole-succinocarboxamide synthase, found in Marinobacter nauticus (strain ATCC 700491 / DSM 11845 / VT8) (Marinobacter aquaeolei).